A 550-amino-acid polypeptide reads, in one-letter code: Arginine--tRNA ligase (550 aa).

The 'HIGH' region motif lies at 130 to 140 (ANPTGPIHLGG).

The protein belongs to the class-I aminoacyl-tRNA synthetase family. Monomer.

The protein localises to the cytoplasm. The catalysed reaction is tRNA(Arg) + L-arginine + ATP = L-arginyl-tRNA(Arg) + AMP + diphosphate. The chain is Arginine--tRNA ligase from Corynebacterium efficiens (strain DSM 44549 / YS-314 / AJ 12310 / JCM 11189 / NBRC 100395).